The following is a 198-amino-acid chain: Holliday junction branch migration complex subunit RuvA (198 aa).

The segment at 1–63 (MYDYIKGQLT…EDAHLLFGFH (63 aa)) is domain I. Residues 64–142 (TEDEKDVFLK…EAPQETGHTK (79 aa)) are domain II. Residues 143-147 (ARSNK) form a flexible linker region. The interval 148 to 198 (AGNTQLDEAIEALLALGYTATELKKIRAFFEGTSETAEQYIKSALKLLMKG) is domain III.

It belongs to the RuvA family. In terms of assembly, homotetramer. Forms an RuvA(8)-RuvB(12)-Holliday junction (HJ) complex. HJ DNA is sandwiched between 2 RuvA tetramers; dsDNA enters through RuvA and exits via RuvB. An RuvB hexamer assembles on each DNA strand where it exits the tetramer. Each RuvB hexamer is contacted by two RuvA subunits (via domain III) on 2 adjacent RuvB subunits; this complex drives branch migration. In the full resolvosome a probable DNA-RuvA(4)-RuvB(12)-RuvC(2) complex forms which resolves the HJ.

It localises to the cytoplasm. Its function is as follows. The RuvA-RuvB-RuvC complex processes Holliday junction (HJ) DNA during genetic recombination and DNA repair, while the RuvA-RuvB complex plays an important role in the rescue of blocked DNA replication forks via replication fork reversal (RFR). RuvA specifically binds to HJ cruciform DNA, conferring on it an open structure. The RuvB hexamer acts as an ATP-dependent pump, pulling dsDNA into and through the RuvAB complex. HJ branch migration allows RuvC to scan DNA until it finds its consensus sequence, where it cleaves and resolves the cruciform DNA. This chain is Holliday junction branch migration complex subunit RuvA, found in Streptococcus pyogenes serotype M49 (strain NZ131).